The following is a 385-amino-acid chain: Probable tRNA sulfurtransferase (385 aa).

The region spanning 65 to 165 (AILQELFSFL…KEHFLVFTER (101 aa)) is the THUMP domain. Residues 183–184 (LL), 208–209 (TF), R267, G285, and Q294 contribute to the ATP site.

It belongs to the ThiI family.

Its subcellular location is the cytoplasm. The catalysed reaction is [ThiI sulfur-carrier protein]-S-sulfanyl-L-cysteine + a uridine in tRNA + 2 reduced [2Fe-2S]-[ferredoxin] + ATP + H(+) = [ThiI sulfur-carrier protein]-L-cysteine + a 4-thiouridine in tRNA + 2 oxidized [2Fe-2S]-[ferredoxin] + AMP + diphosphate. It carries out the reaction [ThiS sulfur-carrier protein]-C-terminal Gly-Gly-AMP + S-sulfanyl-L-cysteinyl-[cysteine desulfurase] + AH2 = [ThiS sulfur-carrier protein]-C-terminal-Gly-aminoethanethioate + L-cysteinyl-[cysteine desulfurase] + A + AMP + 2 H(+). It functions in the pathway cofactor biosynthesis; thiamine diphosphate biosynthesis. Functionally, catalyzes the ATP-dependent transfer of a sulfur to tRNA to produce 4-thiouridine in position 8 of tRNAs, which functions as a near-UV photosensor. Also catalyzes the transfer of sulfur to the sulfur carrier protein ThiS, forming ThiS-thiocarboxylate. This is a step in the synthesis of thiazole, in the thiamine biosynthesis pathway. The sulfur is donated as persulfide by IscS. The protein is Probable tRNA sulfurtransferase of Mycoplasma genitalium (strain ATCC 33530 / DSM 19775 / NCTC 10195 / G37) (Mycoplasmoides genitalium).